Consider the following 155-residue polypeptide: Troponin C, isoform 3 (155 aa).

EF-hand domains are found at residues 11–46 (EQIA…MGQP), 47–82 (FDKK…FIVE), 87–122 (AMQK…LDDQ), and 123–155 (LTEQ…MTGE). The Ca(2+) site is built by D60, D62, S64, R66, and E71. Ca(2+) contacts are provided by D136, D138, S140, T142, and E147.

This sequence belongs to the troponin C family. In terms of tissue distribution, present in both larval and adult muscles.

The protein is Troponin C, isoform 3 (TpnC73F) of Drosophila melanogaster (Fruit fly).